The sequence spans 210 residues: Proteasome subunit beta 2 (210 aa).

Residues 1–12 constitute a propeptide, removed in mature form; by autocatalysis; sequence MSNNVEEKILHG. The active-site Nucleophile is the T13.

The protein belongs to the peptidase T1B family. In terms of assembly, the 20S proteasome core is composed of 14 alpha and 14 beta subunits that assemble into four stacked heptameric rings, resulting in a barrel-shaped structure. The two inner rings, each composed of seven catalytic beta subunits, are sandwiched by two outer rings, each composed of seven alpha subunits. The catalytic chamber with the active sites is on the inside of the barrel. Has a gated structure, the ends of the cylinder being occluded by the N-termini of the alpha-subunits. Is capped at one or both ends by the proteasome regulatory ATPase, PAN.

It is found in the cytoplasm. It carries out the reaction Cleavage of peptide bonds with very broad specificity.. The formation of the proteasomal ATPase PAN-20S proteasome complex, via the docking of the C-termini of PAN into the intersubunit pockets in the alpha-rings, triggers opening of the gate for substrate entry. Interconversion between the open-gate and close-gate conformations leads to a dynamic regulation of the 20S proteasome proteolysis activity. Functionally, component of the proteasome core, a large protease complex with broad specificity involved in protein degradation. This Nitrosopumilus maritimus (strain SCM1) protein is Proteasome subunit beta 2.